We begin with the raw amino-acid sequence, 655 residues long: Protein-glucosylgalactosylhydroxylysine glucosidase (655 aa).

Trp258–Asp259 is a substrate binding site. Catalysis depends on Glu388, which acts as the Proton donor. Lys456 to Gln457 is a substrate binding site.

It belongs to the glycosyl hydrolase 65 family.

The catalysed reaction is (5R)-5-O-[alpha-D-glucosyl-(1-&gt;2)-beta-D-galactosyl]-5-hydroxy-L-lysyl-[collagen] + H2O = (5R)-5-O-(beta-D-galactosyl)-5-hydroxy-L-lysyl-[collagen] + D-glucose. Its function is as follows. Catalyzes the hydrolysis of glucose from the disaccharide unit linked to hydroxylysine residues of collagen and collagen-like proteins. In Danio rerio (Zebrafish), this protein is Protein-glucosylgalactosylhydroxylysine glucosidase.